Here is a 219-residue protein sequence, read N- to C-terminus: Transmembrane protein 125 (219 aa).

4 helical membrane passes run 36-56 (LCFVVAVGLVAGCGAGGVALL), 68-88 (LATGTVLCLLALLVLVKQLMS), 114-134 (ALVVLLSGLVLLVTGLTLAGL), and 147-167 (MLSVGIALAALGSLLLLGLLL).

The protein resides in the membrane. This chain is Transmembrane protein 125 (TMEM125), found in Homo sapiens (Human).